Reading from the N-terminus, the 393-residue chain is Methylthioribose kinase (393 aa).

Residues Asn38, Lys53, and 107-109 (EDL) each bind ATP. A substrate-binding site is contributed by Asp225. Residue 242-244 (DPE) participates in ATP binding. Arg332 serves as a coordination point for substrate.

The protein belongs to the methylthioribose kinase family. In terms of assembly, homodimer.

The catalysed reaction is 5-(methylsulfanyl)-D-ribose + ATP = 5-(methylsulfanyl)-alpha-D-ribose 1-phosphate + ADP + H(+). It functions in the pathway amino-acid biosynthesis; L-methionine biosynthesis via salvage pathway; S-methyl-5-thio-alpha-D-ribose 1-phosphate from S-methyl-5'-thioadenosine (hydrolase route): step 2/2. In terms of biological role, catalyzes the phosphorylation of methylthioribose into methylthioribose-1-phosphate. The polypeptide is Methylthioribose kinase (Bacillus thuringiensis subsp. konkukian (strain 97-27)).